A 547-amino-acid chain; its full sequence is Isoflavonoid 7-O-beta-apiosyl-glucoside beta-glycosidase (547 aa).

The first 31 residues, 1-31, serve as a signal peptide directing secretion; that stretch reads MHAMTFKAILLLGLLALVSTSASIAFAKEVR. Position 59 (Gln-59) interacts with a beta-D-glucoside. Residues Asn-72 and Asn-132 are each glycosylated (N-linked (GlcNAc...) asparagine). His-159 provides a ligand contact to a beta-D-glucoside. N-linked (GlcNAc...) asparagine glycosylation is present at Asn-175. An a beta-D-glucoside-binding site is contributed by 204–205; sequence NE. The active-site Proton donor is Glu-205. Cysteines 224 and 232 form a disulfide. N-linked (GlcNAc...) asparagine glycosylation is present at Asn-285. A beta-D-glucoside is bound by residues Tyr-348, Glu-419, Trp-468, 475–476, and Phe-484; that span reads EW. The Nucleophile role is filled by Glu-419. N-linked (GlcNAc...) asparagine glycosylation is present at Asn-490.

It belongs to the glycosyl hydrolase 1 family. In terms of assembly, homotetramer.

It carries out the reaction 7-[beta-D-apiofuranosyl-(1-&gt;6)-beta-D-glucopyranosyloxy]isoflavonoid + H2O = a 7-hydroxyisoflavonoid + beta-D-apiofuranosyl-(1-&gt;6)-D-glucose.. Not inhibited by iron, calcium, mercury, manganese, zinc or EDTA. Its function is as follows. Hydrolyzes dalpatein 7-O-beta-D-apiofuranosyl-(1-&gt;6)-beta-D-glucopyranoside and dalnigrein 7-O-beta-D-apiofuranosyl-(1-&gt;6)-beta-D-glucopyranoside. Also has activity towards pNP-beta-D-fucoside and pNP-beta-D-glucoside, but not pNP-beta-cellobioside. This is Isoflavonoid 7-O-beta-apiosyl-glucoside beta-glycosidase from Dalbergia nigrescens (Thai blackwood).